The chain runs to 157 residues: Phosphopantetheine adenylyltransferase (157 aa).

Residue Thr10 participates in substrate binding. ATP contacts are provided by residues 10 to 11 (TF) and His18. Substrate is bound by residues Lys42, Leu74, and Arg88. ATP-binding positions include 89–91 (GLR), Glu99, and 124–130 (NAFISSS).

Belongs to the bacterial CoaD family. As to quaternary structure, homohexamer. The cofactor is Mg(2+).

The protein resides in the cytoplasm. The enzyme catalyses (R)-4'-phosphopantetheine + ATP + H(+) = 3'-dephospho-CoA + diphosphate. The protein operates within cofactor biosynthesis; coenzyme A biosynthesis; CoA from (R)-pantothenate: step 4/5. Reversibly transfers an adenylyl group from ATP to 4'-phosphopantetheine, yielding dephospho-CoA (dPCoA) and pyrophosphate. The polypeptide is Phosphopantetheine adenylyltransferase (Helicobacter pylori (strain P12)).